A 146-amino-acid chain; its full sequence is D-aminoacyl-tRNA deacylase (146 aa).

The Gly-cisPro motif, important for rejection of L-amino acids signature appears at 137 to 138 (GP).

It belongs to the DTD family. In terms of assembly, homodimer.

The protein resides in the cytoplasm. The enzyme catalyses glycyl-tRNA(Ala) + H2O = tRNA(Ala) + glycine + H(+). It catalyses the reaction a D-aminoacyl-tRNA + H2O = a tRNA + a D-alpha-amino acid + H(+). Its function is as follows. An aminoacyl-tRNA editing enzyme that deacylates mischarged D-aminoacyl-tRNAs. Also deacylates mischarged glycyl-tRNA(Ala), protecting cells against glycine mischarging by AlaRS. Acts via tRNA-based rather than protein-based catalysis; rejects L-amino acids rather than detecting D-amino acids in the active site. By recycling D-aminoacyl-tRNA to D-amino acids and free tRNA molecules, this enzyme counteracts the toxicity associated with the formation of D-aminoacyl-tRNA entities in vivo and helps enforce protein L-homochirality. The polypeptide is D-aminoacyl-tRNA deacylase (Thermodesulfovibrio yellowstonii (strain ATCC 51303 / DSM 11347 / YP87)).